Reading from the N-terminus, the 776-residue chain is Reticulon-1 (776 aa).

Disordered stretches follow at residues 1 to 103 (MAAP…GEGS), 136 to 168 (ISESPEELGTPGSSLPDVPGIESRGLFSSDSGI), 204 to 244 (EVKH…EPAP), and 285 to 580 (LTEI…APPP). Positions 204–240 (EVKHQEQNHPELEDKDLDFKNKDTDISIKPEGVREPD) are enriched in basic and acidic residues. The residue at position 327 (serine 327) is a Phosphoserine. Positions 328-341 (PGSITPPSSGTEPS) are enriched in low complexity. Phosphoserine is present on residues serine 350, serine 352, and serine 487. The segment covering 497–511 (AIREETGVRAEERAP) has biased composition (basic and acidic residues). Residues 589–776 (AIDLLYWRDI…KIPGAKRHAE (188 aa)) form the Reticulon domain. A run of 2 helical transmembrane segments spans residues 603 to 623 (IVFGSFLLLLFSLTQFSVVSV) and 705 to 725 (FAVLMWLLTYVGALFNGLTLL).

In terms of assembly, interacts with NDRG1. Interacts with BACE1. Interacts with TMEM33. In terms of processing, phosphorylated.

It localises to the endoplasmic reticulum membrane. Its subcellular location is the golgi apparatus membrane. Its function is as follows. Inhibits amyloid precursor protein processing, probably by blocking BACE1 activity. The polypeptide is Reticulon-1 (RTN1) (Pan troglodytes (Chimpanzee)).